The chain runs to 150 residues: Interferon antagonist OPG027 (150 aa).

This sequence belongs to the orthopoxvirus OPG027 family.

Inhibits antiviral activity induced by type I interferons. Does not block signal transduction of IFN, but is important to counteract the host antiviral state induced by a pre-treatment with IFN. The polypeptide is Interferon antagonist OPG027 (OPG027) (Cynomys gunnisoni (Gunnison's prairie dog)).